Here is a 494-residue protein sequence, read N- to C-terminus: Histidine--tRNA ligase (494 aa).

The segment at 1–20 (MAKDQKKQPRPKAETPKGFR) is disordered.

Belongs to the class-II aminoacyl-tRNA synthetase family. Homodimer.

The protein resides in the cytoplasm. It carries out the reaction tRNA(His) + L-histidine + ATP = L-histidyl-tRNA(His) + AMP + diphosphate + H(+). The protein is Histidine--tRNA ligase of Paracoccus denitrificans (strain Pd 1222).